Reading from the N-terminus, the 239-residue chain is Endolytic peptidoglycan transglycosylase RlpA (239 aa).

The first 25 residues, 1-25 (MTLTRKTLFLLTAAFGIHSFQTASA), serve as a signal peptide directing secretion. Positions 160 to 239 (VAENKDIFID…GMVRAVLTAG (80 aa)) constitute an SPOR domain.

Belongs to the RlpA family.

Its function is as follows. Lytic transglycosylase with a strong preference for naked glycan strands that lack stem peptides. This is Endolytic peptidoglycan transglycosylase RlpA from Neisseria meningitidis serogroup A / serotype 4A (strain DSM 15465 / Z2491).